The following is a 566-amino-acid chain: Glutamate--tRNA ligase (566 aa).

Residues 104–114 (PNPDGPLHLGN) carry the 'HIGH' region motif.

Belongs to the class-I aminoacyl-tRNA synthetase family. Glutamate--tRNA ligase type 2 subfamily.

It is found in the cytoplasm. The catalysed reaction is tRNA(Glu) + L-glutamate + ATP = L-glutamyl-tRNA(Glu) + AMP + diphosphate. Functionally, catalyzes the attachment of glutamate to tRNA(Glu) in a two-step reaction: glutamate is first activated by ATP to form Glu-AMP and then transferred to the acceptor end of tRNA(Glu). The protein is Glutamate--tRNA ligase of Metallosphaera sedula (strain ATCC 51363 / DSM 5348 / JCM 9185 / NBRC 15509 / TH2).